The chain runs to 178 residues: Orotate phosphoribosyltransferase (178 aa).

5-phospho-alpha-D-ribose 1-diphosphate is bound by residues arginine 92, lysine 93, lysine 96, and glutamate 118–serine 126. Orotate-binding residues include threonine 122 and arginine 150.

Belongs to the purine/pyrimidine phosphoribosyltransferase family. PyrE subfamily. In terms of assembly, homodimer. Mg(2+) serves as cofactor.

It catalyses the reaction orotidine 5'-phosphate + diphosphate = orotate + 5-phospho-alpha-D-ribose 1-diphosphate. The protein operates within pyrimidine metabolism; UMP biosynthesis via de novo pathway; UMP from orotate: step 1/2. In terms of biological role, catalyzes the transfer of a ribosyl phosphate group from 5-phosphoribose 1-diphosphate to orotate, leading to the formation of orotidine monophosphate (OMP). This chain is Orotate phosphoribosyltransferase, found in Methanosphaera stadtmanae (strain ATCC 43021 / DSM 3091 / JCM 11832 / MCB-3).